Consider the following 424-residue polypeptide: Tol-Pal system protein TolB (424 aa).

Residues 1 to 20 form the signal peptide; the sequence is MKQFIVFILSLYTTLSWAVL.

It belongs to the TolB family. The Tol-Pal system is composed of five core proteins: the inner membrane proteins TolA, TolQ and TolR, the periplasmic protein TolB and the outer membrane protein Pal. They form a network linking the inner and outer membranes and the peptidoglycan layer.

The protein resides in the periplasm. Its function is as follows. Part of the Tol-Pal system, which plays a role in outer membrane invagination during cell division and is important for maintaining outer membrane integrity. This chain is Tol-Pal system protein TolB, found in Vesicomyosocius okutanii subsp. Calyptogena okutanii (strain HA).